Here is a 1063-residue protein sequence, read N- to C-terminus: MGFELDRFDGDVDPDLKCALCHKVLEDPLTTPCGHVFCAGCVLPWVVQEGSCPARCRGRLSAKELNHVLPLKRLILKLDIKCAHAARGCGRVVKLQDLPEHLERCDFAPARCRHAGCGQLLLRRDVEAHMRDACDARPVGRCQEGCGLPLTHGEQRAGGHCCARALRAHNGALQARLGALHKALKKEALRAGKREKSLVAQLAAAQLELQMTALRYQKKFTEYSARLDSLSRCVAAPPGGKGEETKSLTLVLHRDSGSLGFNIIGGRPCVDNQDGSSSEGIFVSKIVDSGPAAKEGGLQIHDRIIEVNGKDLSRATHDQAVEAFKTAKEPIVVQVLRRTPRTKMFTPASESQLVDTGTQTDITFEHIMALTKMSSPSPPVLDPYLLPEEHPASHDYYDPNDYMGDIHQDMDREELELEEVGLYRMNSQDKLGLTVCYRTDDEDDIGIYISEIDPNSIAAKDGRIREGDRIIQINGIEVQNREEAVALLTSEENKNFSLLIARPELQLDEGWMDDDRNDFLDDLHMDMLEEQHHQAMQFTASVLQQKKHEEDGGTTDTATILSNQHEKDSGVGRTDESTRNDESSEQENNGEDATASANPLAGQRKLTCSQDTLGSGDLPFSNESFISADCTDVDYLGIPEDECERFRELLELKCQVQSASPYSLYYPSSPLDAAGKSDPESVDKELELLNEELRSIELECLSIVRAHKMQQLKEQYRESWMLHHSGFRNYNTSVDVRRHELSDITELPEKSDKDSSSAYNTGESCRSTPLTLEISPDNSLRRVAEGSSEGATANIEAYRPSPKNLLAITEDPEVSTPSYNPSAKELDPSQALEIKERRGSDGSRSPTASPKLGNAYLPSYHHSPYKHAHIPAHAQHYQSYMHLIQQKSAVEYAQSQMSLVSMCKDLNSSNSVEPRMEWKVKIRSDGTRYITKRPVRDRLLRERALKIREERSGLTTDDDAMSEMKMGRYWSKEERKQHLVKAKEQRRRREFMMQSRLDCLKEQQASDDRKEMNILELSHKKMMKKRNKKIFDNWMTIQELLTHGTKSPDGTRVYNSFLSVTTV.

An RING-type; degenerate zinc finger spans residues 18–56; that stretch reads CALCHKVLEDPLTTPCGHVFCAGCVLPWVVQEGSCPARC. A TRAF-type zinc finger spans residues 100-158; that stretch reads EHLERCDFAPARCRHAGCGQLLLRRDVEAHMRDACDARPVGRCQEGCGLPLTHGEQRAG. PDZ domains follow at residues 249–339 and 419–503; these read TLVL…LRRT and EVGL…IARP. The residue at position 427 (Ser-427) is a Phosphoserine. A disordered region spans residues 545 to 602; it reads QKKHEEDGGTTDTATILSNQHEKDSGVGRTDESTRNDESSEQENNGEDATASANPLAG. Polar residues predominate over residues 554 to 563; that stretch reads TTDTATILSN. The span at 564-582 shows a compositional bias: basic and acidic residues; that stretch reads QHEKDSGVGRTDESTRNDE. The stretch at 680–705 forms a coiled coil; sequence ESVDKELELLNEELRSIELECLSIVR. Residues 746–755 are compositionally biased toward basic and acidic residues; sequence ELPEKSDKDS. 2 disordered regions span residues 746–798 and 834–853; these read ELPE…IEAY and IKERRGSDGSRSPTASPKLG. Positions 756–770 are enriched in polar residues; the sequence is SSAYNTGESCRSTPL.

As to quaternary structure, interacts with NLGN1 and EFNB2. Interacts with UBE2D2 and with MUSK via the first PDZ domain. In myotubes, the interaction between PDZRN3 and MUSK is enhanced upon agrin stimulation. In terms of processing, auto-ubiquitinated. In terms of tissue distribution, highly expressed in skeletal and cardiac muscle and at lower levels in spinal cord and brain (at protein level). Also expressed in kidney and lung. In muscles, concentrated at the neuromuscular junction (NMJ).

It is found in the synapse. Its subcellular location is the cytoplasm. The enzyme catalyses S-ubiquitinyl-[E2 ubiquitin-conjugating enzyme]-L-cysteine + [acceptor protein]-L-lysine = [E2 ubiquitin-conjugating enzyme]-L-cysteine + N(6)-ubiquitinyl-[acceptor protein]-L-lysine.. It participates in protein modification; protein ubiquitination. Its function is as follows. E3 ubiquitin-protein ligase. Plays an important role in regulating the surface level of MUSK on myotubes. Mediates the ubiquitination of MUSK, promoting its endocytosis and lysosomal degradation. Might contribute to terminal myogenic differentiation. The polypeptide is E3 ubiquitin-protein ligase PDZRN3 (Pdzrn3) (Mus musculus (Mouse)).